The primary structure comprises 312 residues: Olfactory receptor 7D4 (312 aa).

At 1 to 25 the chain is on the extracellular side; it reads MEAENLTELSKFLLLGLSDDPELQP. N5 carries an N-linked (GlcNAc...) asparagine glycan. The chain crosses the membrane as a helical span at residues 26 to 46; that stretch reads VLFGLFLSMYLVTVLGNLLII. Residues 47 to 54 lie on the Cytoplasmic side of the membrane; the sequence is LAVSSDSH. Residues 55 to 75 form a helical membrane-spanning segment; that stretch reads LHTPMYFFLSNLSFVDICFIS. Residues 76 to 99 lie on the Extracellular side of the membrane; the sequence is TTVPKMLVSIQARSKDISYMGCLT. The cysteines at positions 97 and 189 are disulfide-linked. A helical membrane pass occupies residues 100 to 120; it reads QVYFLMMFAGMDTFLLAVMAY. The Cytoplasmic portion of the chain corresponds to 121 to 139; that stretch reads DRFVAICHPLHYTVIMNPC. A helical membrane pass occupies residues 140–160; that stretch reads LCGLLVLASWFIIFWFSLVHI. The Extracellular portion of the chain corresponds to 161 to 197; the sequence is LLMKRLTFSTGTEIPHFFCEPAQVLKVACSNTLLNNI. Residues 198 to 217 form a helical membrane-spanning segment; it reads VLYVATALLGVFPVAGILFS. At 218-237 the chain is on the cytoplasmic side; that stretch reads YSQIVSSLMGMSSTKGKYKA. A helical membrane pass occupies residues 238-258; sequence FSTCGSHLCVVSLFYGTGLGV. The Extracellular portion of the chain corresponds to 259–271; it reads YLSSAVTHSSQSS. A helical transmembrane segment spans residues 272 to 292; that stretch reads STASVMYAMVTPMLNPFIYSL. Topologically, residues 293–312 are cytoplasmic; the sequence is RNKDVKGALERLLSRADSCP.

This sequence belongs to the G-protein coupled receptor 1 family. In terms of tissue distribution, nasal olfactory epithelium.

The protein localises to the cell membrane. In terms of biological role, odorant receptor. Selectively activated by androstenone and the related odorous steroid androstadienone. This is Olfactory receptor 7D4 (OR7D4) from Homo sapiens (Human).